We begin with the raw amino-acid sequence, 302 residues long: Homoserine O-acetyltransferase (302 aa).

C142 functions as the Acyl-thioester intermediate in the catalytic mechanism. Substrate is bound by residues K163 and S192. H235 acts as the Proton acceptor in catalysis. The active site involves E237. R249 contributes to the substrate binding site.

Belongs to the MetA family.

The protein resides in the cytoplasm. It carries out the reaction L-homoserine + acetyl-CoA = O-acetyl-L-homoserine + CoA. Its pathway is amino-acid biosynthesis; L-methionine biosynthesis via de novo pathway; O-acetyl-L-homoserine from L-homoserine: step 1/1. In terms of biological role, transfers an acetyl group from acetyl-CoA to L-homoserine, forming acetyl-L-homoserine. This chain is Homoserine O-acetyltransferase, found in Clostridium novyi (strain NT).